Here is a 328-residue protein sequence, read N- to C-terminus: Phosphate acyltransferase (328 aa).

Belongs to the PlsX family. In terms of assembly, homodimer. Probably interacts with PlsY.

Its subcellular location is the cytoplasm. The catalysed reaction is a fatty acyl-[ACP] + phosphate = an acyl phosphate + holo-[ACP]. It participates in lipid metabolism; phospholipid metabolism. Functionally, catalyzes the reversible formation of acyl-phosphate (acyl-PO(4)) from acyl-[acyl-carrier-protein] (acyl-ACP). This enzyme utilizes acyl-ACP as fatty acyl donor, but not acyl-CoA. The protein is Phosphate acyltransferase of Campylobacter jejuni subsp. jejuni serotype O:2 (strain ATCC 700819 / NCTC 11168).